Consider the following 371-residue polypeptide: Alanine dehydrogenase (371 aa).

Residues arginine 15 and lysine 74 each contribute to the substrate site. Histidine 95 (proton donor/acceptor) is an active-site residue. Residues serine 133, 177–178, aspartate 197, serine 219, 238–239, 266–269, arginine 279, and 298–301 each bind NAD(+); these read QA, VL, IAID, and VANM. The Proton donor/acceptor role is filled by aspartate 269.

It belongs to the AlaDH/PNT family. In terms of assembly, homohexamer. Trimer of dimer.

It catalyses the reaction L-alanine + NAD(+) + H2O = pyruvate + NH4(+) + NADH + H(+). It functions in the pathway amino-acid degradation; L-alanine degradation via dehydrogenase pathway; NH(3) and pyruvate from L-alanine: step 1/1. Its function is as follows. Catalyzes the reversible reductive amination of pyruvate to L-alanine. May play a role in cell wall synthesis as L-alanine is an important constituent of the peptidoglycan layer. This Staphylococcus saprophyticus subsp. saprophyticus (strain ATCC 15305 / DSM 20229 / NCIMB 8711 / NCTC 7292 / S-41) protein is Alanine dehydrogenase (ald).